A 472-amino-acid chain; its full sequence is Succinate-semialdehyde dehydrogenase [NADP(+)] (472 aa).

NADP(+) is bound by residues 134-135 (WN), 158-161 (KHAS), and 210-211 (GS). The active-site Proton acceptor is glutamate 232. Position 233 (leucine 233) interacts with NADP(+). Cysteine 266 (nucleophile) is an active-site residue. Glutamate 363 provides a ligand contact to NADP(+).

It belongs to the aldehyde dehydrogenase family.

It catalyses the reaction succinate semialdehyde + NADP(+) + H2O = succinate + NADPH + 2 H(+). Its function is as follows. Catalyzes the NADP(+)-dependent oxidation of succinate semialdehyde to succinate. It is believed to be the main source of succinate semialdehyde dehydrogenase activity in Mycobacterium. The protein is Succinate-semialdehyde dehydrogenase [NADP(+)] (gabD1) of Mycolicibacterium paratuberculosis (strain ATCC BAA-968 / K-10) (Mycobacterium paratuberculosis).